Consider the following 186-residue polypeptide: MNRFIKSATSLKDCINDSKKEVCLIGRSNVGKSTIINGLANAKIAQTSKTPGRTVTMNFYEISNQRIVDLPGYGYARIKKSQKEEISLFLSDYLNHRKNLVGIFLILDLGVITDQDIEIVRLLTTLDVEYYIVFNKIDKYPKSAYINNKEKILDALKVNEDRILLISAKNKQNLNNLMLKIIDVIS.

In terms of domain architecture, EngB-type G spans serine 18–serine 186. Residues glycine 26–serine 33, glycine 52–threonine 56, aspartate 69–glycine 72, asparagine 135–aspartate 138, and isoleucine 166–alanine 168 contribute to the GTP site. The Mg(2+) site is built by serine 33 and threonine 54.

This sequence belongs to the TRAFAC class TrmE-Era-EngA-EngB-Septin-like GTPase superfamily. EngB GTPase family. Requires Mg(2+) as cofactor.

Functionally, necessary for normal cell division and for the maintenance of normal septation. The polypeptide is Probable GTP-binding protein EngB (Mycoplasmoides gallisepticum (strain R(low / passage 15 / clone 2)) (Mycoplasma gallisepticum)).